The primary structure comprises 269 residues: Probable 3-deoxy-manno-octulosonic acid transferase (269 aa).

It is found in the cytoplasm. It catalyses the reaction an alpha-Kdo-(2-&gt;4)-alpha-Kdo-(2-&gt;6)-lipid IVA + CMP-3-deoxy-beta-D-manno-octulosonate = an alpha-Kdo-(2-&gt;4)-alpha-Kdo-(2-&gt;4)-alpha-Kdo-(2-&gt;6)-lipid IVA + CMP + H(+). The protein operates within bacterial outer membrane biogenesis; LPS core biosynthesis. Functionally, involved in the biosynthesis of the core oligosaccharide region of lipopolysaccharide (LPS). Required for the addition of 3-deoxy-D-manno-oct-2-ulosonic acid III (KdoIII) to the KdoII residue of the inner lipopolysaccharide core. The sequence is that of Probable 3-deoxy-manno-octulosonic acid transferase from Salmonella typhimurium (strain LT2 / SGSC1412 / ATCC 700720).